A 1041-amino-acid polypeptide reads, in one-letter code: Serine-repeat antigen protein 6 (1041 aa).

Positions 1–34 are cleaved as a signal peptide; that stretch reads MIFFNFKLNRMICPIFFLYIINVLFTQYFIKCEG. A glycan (N-linked (GlcNAc...) asparagine) is linked at Asn-84. The span at 101-111 shows a compositional bias: low complexity; that stretch reads KVVSSSESGKG. Residues 101–173 are disordered; that stretch reads KVVSSSESGK…TESSSETLNK (73 aa). The segment covering 114 to 149 has biased composition (polar residues); sequence VSHTKVTSEGLSDTQPNVTQSVSSSTHTPGSLDSTM. Residue Asn-130 is glycosylated (N-linked (GlcNAc...) asparagine). The span at 150–168 shows a compositional bias: low complexity; that stretch reads STEQHSSVSQSSLPTESSS. N-linked (GlcNAc...) asparagine glycosylation occurs at Asn-459. The segment at 500–577 is disordered; that stretch reads TLPSESPSES…GDTNYVYDFD (78 aa). A compositionally biased stretch (low complexity) spans 502 to 515; it reads PSESPSESSSKSDS. The span at 521-545 shows a compositional bias: basic and acidic residues; the sequence is NDKDKNEDKDDMSKNSKEEFKNDDK. A glycan (N-linked (GlcNAc...) asparagine) is linked at Asn-554. The segment covering 564-574 has biased composition (low complexity); sequence NINNGDTNYVY. Asn-583 is a glycosylation site (N-linked (GlcNAc...) asparagine). Cys-654 is a catalytic residue. A glycan (N-linked (GlcNAc...) asparagine) is linked at Asn-684. Residues His-820 and Asn-845 contribute to the active site. Asn-984 carries an N-linked (GlcNAc...) asparagine glycan.

It belongs to the peptidase C1 family. Just prior to merozoite egress from host erythrocytes, proteolytically cleaved by SUB1 to generate the active 75kDa form.

The protein localises to the parasitophorous vacuole lumen. It is found in the parasitophorous vacuole membrane. Functionally, cysteine protease which plays an essential role in merozoite egress from host erythrocytes. May cleave host SPTB/beta spectrin and ANK1/ankyrin-1 which disrupts host erythrocyte actin cytoskeleton and leads to host erythrocyte cell membrane rupture. This is Serine-repeat antigen protein 6 from Plasmodium falciparum.